The following is a 327-amino-acid chain: Annexin A8 (327 aa).

Annexin repeat units lie at residues 21–92 (FNPD…ALMY), 93–164 (PPYR…CLLQ), 177–249 (GLAL…TVVK), and 253–324 (NLHS…SLVG). Residues Met-266, Gly-268, Gly-270, and Asp-310 each contribute to the Ca(2+) site.

Belongs to the annexin family.

This protein is an anticoagulant protein that acts as an indirect inhibitor of the thromboplastin-specific complex, which is involved in the blood coagulation cascade. The protein is Annexin A8 (ANXA8) of Pan troglodytes (Chimpanzee).